The primary structure comprises 128 residues: Ig kappa chain V-V region T1 (128 aa).

A signal peptide spans 1–20; sequence MRTPAQFLGILLLWFPGIKC. The framework-1 stretch occupies residues 21–43; the sequence is DIKMTQSPSSMYASLGERVTISC. The cysteines at positions 43 and 108 are disulfide-linked. The complementarity-determining-1 stretch occupies residues 44–54; sequence KASQDINSYLT. Residues 55–69 are framework-2; it reads WFQQKPGKSPKTLLY. Positions 70 to 76 are complementarity-determining-2; the sequence is RANRLVD. Residues 77–108 form a framework-3 region; sequence GVPSRFSGSGSGQDFSLTISSLEYEDMGIYYC. The interval 109–117 is complementarity-determining-3; sequence LQYDEFPLT. The segment at 118 to 127 is framework-4; the sequence is FGAGTKLELK.

This is Ig kappa chain V-V region T1 from Mus musculus (Mouse).